The primary structure comprises 445 residues: ATP-dependent rRNA helicase rrp3 (445 aa).

The span at Met1 to Ser10 shows a compositional bias: basic and acidic residues. A disordered region spans residues Met1–Lys28. A compositionally biased stretch (low complexity) spans Asp17–Lys28. The Q motif motif lies at Lys28 to Glu56. A Helicase ATP-binding domain is found at Ile59–Val229. Position 72 to 79 (Ala72 to Thr79) interacts with ATP. Positions Asp178 to Asp181 match the DEAD box motif. Positions Lys240–Met400 constitute a Helicase C-terminal domain. A disordered region spans residues Leu415–Gly445.

The protein belongs to the DEAD box helicase family. DDX47/RRP3 subfamily. In terms of assembly, interacts with the SSU processome.

The protein localises to the nucleus. It carries out the reaction ATP + H2O = ADP + phosphate + H(+). Its function is as follows. ATP-dependent rRNA helicase required for pre-ribosomal RNA processing. Involved in the maturation of the 35S-pre-rRNA and to its cleavage to mature 18S rRNA. The sequence is that of ATP-dependent rRNA helicase rrp3 from Aspergillus terreus (strain NIH 2624 / FGSC A1156).